Consider the following 469-residue polypeptide: Glutamate-1-semialdehyde 2,1-aminomutase, chloroplastic (469 aa).

A chloroplast-targeting transit peptide spans 1–34 (MAGAAAAVASGISIRPVAAPKISRAPRSRSVVRA). Position 309 is an N6-(pyridoxal phosphate)lysine (lysine 309).

The protein belongs to the class-III pyridoxal-phosphate-dependent aminotransferase family. HemL subfamily. In terms of assembly, homodimer. Requires pyridoxal 5'-phosphate as cofactor.

Its subcellular location is the plastid. It localises to the chloroplast. It carries out the reaction (S)-4-amino-5-oxopentanoate = 5-aminolevulinate. Its pathway is porphyrin-containing compound metabolism; protoporphyrin-IX biosynthesis; 5-aminolevulinate from L-glutamyl-tRNA(Glu): step 2/2. It participates in porphyrin-containing compound metabolism; chlorophyll biosynthesis. The sequence is that of Glutamate-1-semialdehyde 2,1-aminomutase, chloroplastic (GSA) from Hordeum vulgare (Barley).